A 393-amino-acid chain; its full sequence is Fractalkine (393 aa).

An N-terminal signal peptide occupies residues 1 to 24 (MAPSQLAWLLRLAAFFHLCTLLAG). The interval 25–100 (QHLGMTKCNI…HQTAALTRNG (76 aa)) is chemokine and involved in interaction with ITGAV:ITGB3 and ITGA4:ITGB1. Residues 25–337 (QHLGMTKCNI…PDSQAATRRQ (313 aa)) lie on the Extracellular side of the membrane. 2 disulfides stabilise this stretch: C32-C58 and C36-C74. N33 carries N-linked (GlcNAc...) asparagine glycosylation. Positions 101 to 337 (GKFEKRVDNV…PDSQAATRRQ (237 aa)) are mucin-like stalk. Disordered regions lie at residues 114–184 (ITSA…PQST) and 213–303 (EKAT…SGSQ). Composition is skewed to polar residues over residues 153–172 (GTSQ…TSKA) and 223–240 (ALST…NVGS). A helical transmembrane segment spans residues 338–358 (AVGLLAFLGLLFCLGVAMFAY). The Cytoplasmic segment spans residues 359-393 (QSLQGCPRKMAGEMVEGLRYVPRSCGSNSYVLVPV).

Belongs to the intercrine delta family. In terms of assembly, monomer. Forms a ternary complex with CX3CR1 and ITGAV:ITGB3 or ITGA4:ITGB1. In terms of processing, a soluble short form may be released by proteolytic cleavage from the long membrane-anchored form. Highest levels in brain (neurons). Significant levels in kidney, heart, lung and adrenal gland.

It is found in the cell membrane. The protein localises to the secreted. In terms of biological role, chemokine that acts as a ligand for both CX3CR1 and integrins ITGAV:ITGB3 and ITGA4:ITGB1. The CX3CR1-CX3CL1 signaling exerts distinct functions in different tissue compartments, such as immune response, inflammation, cell adhesion and chemotaxis. Regulates leukocyte adhesion and migration processes at the endothelium. Can activate integrins in both a CX3CR1-dependent and CX3CR1-independent manner. In the presence of CX3CR1, activates integrins by binding to the classical ligand-binding site (site 1) in integrins. In the absence of CX3CR1, binds to a second site (site 2) in integrins which is distinct from site 1 and enhances the binding of other integrin ligands to site 1. The soluble form is chemotactic for T-cells and monocytes, but not for neutrophils. Its function is as follows. The membrane-bound form promotes adhesion of those leukocytes to endothelial cells. The polypeptide is Fractalkine (Cx3cl1) (Rattus norvegicus (Rat)).